The sequence spans 475 residues: Protein FIZZY-RELATED 1 (475 aa).

Residues 1–27 (MEEDESTTPKKKSDSQLNLPPSMNRPT) form a disordered region. A compositionally biased stretch (polar residues) spans 15–27 (SQLNLPPSMNRPT). 7 WD repeats span residues 166–203 (QDDF…VTKL), 207–246 (GVDE…NIRT), 249–289 (GHRL…SKLK), 290–329 (GHKS…PVLR), 332–374 (EHAA…HLNC), 376–417 (DTNS…KLAT), and 420–459 (GHSY…KSQS).

This sequence belongs to the WD repeat CDC20/Fizzy family. In terms of assembly, associates with the APC/C complex. Interacts with CDC20-1, CDC20-2, CYCA1-1, CYCA1-2, CYCA3-4, CYCB1-1 and CYCB1-2. Binds to GIG1. Expressed in the root tip, predominantly in the root cap, quiescent center cells, surrounding stem cells and columella.

Its subcellular location is the nucleus. The protein operates within protein modification; protein ubiquitination. Functionally, activator protein that regulates the ubiquitin ligase activity and substrate specificity of the anaphase promoting complex/cyclosome (APC/C). Required for meristem organization and maintenance of quiescent center identity and stem cells. The sequence is that of Protein FIZZY-RELATED 1 (FZR1) from Arabidopsis thaliana (Mouse-ear cress).